Here is a 131-residue protein sequence, read N- to C-terminus: MAGIKALISLSFGGAIGLMFLMLGCALPIYNQYWPLFVLFFYILSPIPYCIARRLVDDTDAMSNACKELAIFLTTGVVVSAFGLPVVFARAHLIEWGACALVLTGNTVIFATILGFFLVFGSNDDFSWQQW.

Transmembrane regions (helical) follow at residues 7 to 27, 32 to 52, 69 to 89, and 100 to 120; these read LISLSFGGAIGLMFLMLGCAL, QYWPLFVLFFYILSPIPYCIA, LAIFLTTGVVVSAFGLPVVFA, and ALVLTGNTVIFATILGFFLVF.

Belongs to the OB-RGRP/VPS55 family. Interacts with RAB13.

The protein resides in the membrane. Its function is as follows. Negatively regulates growth hormone (GH) receptor cell surface expression in liver. May play a role in liver resistance to GH during periods of reduced nutrient availability. This Rattus norvegicus (Rat) protein is Leptin receptor overlapping transcript-like 1 (Leprotl1).